The primary structure comprises 344 residues: tRNA N6-adenosine threonylcarbamoyltransferase (344 aa).

Positions 111 and 115 each coordinate Fe cation. Substrate is bound by residues Leu-134 to Gly-138, Asp-167, Gly-180, and Asn-277. Fe cation is bound at residue Asp-305.

It belongs to the KAE1 / TsaD family. Fe(2+) is required as a cofactor.

Its subcellular location is the cytoplasm. It carries out the reaction L-threonylcarbamoyladenylate + adenosine(37) in tRNA = N(6)-L-threonylcarbamoyladenosine(37) in tRNA + AMP + H(+). Required for the formation of a threonylcarbamoyl group on adenosine at position 37 (t(6)A37) in tRNAs that read codons beginning with adenine. Is involved in the transfer of the threonylcarbamoyl moiety of threonylcarbamoyl-AMP (TC-AMP) to the N6 group of A37, together with TsaE and TsaB. TsaD likely plays a direct catalytic role in this reaction. The sequence is that of tRNA N6-adenosine threonylcarbamoyltransferase from Glaesserella parasuis serovar 5 (strain SH0165) (Haemophilus parasuis).